A 211-amino-acid polypeptide reads, in one-letter code: Pyridoxine/pyridoxamine 5'-phosphate oxidase (211 aa).

Substrate contacts are provided by residues 7–10 (RTDY) and K65. Residues 60–65 (RIVLIK), 75–76 (FT), R81, and K82 contribute to the FMN site. Residues Y122, R126, and S130 each contribute to the substrate site. FMN contacts are provided by residues 139–140 (QS) and W183. Position 189–191 (189–191 (RLH)) interacts with substrate. R193 provides a ligand contact to FMN.

This sequence belongs to the pyridoxamine 5'-phosphate oxidase family. As to quaternary structure, homodimer. Requires FMN as cofactor.

The enzyme catalyses pyridoxamine 5'-phosphate + O2 + H2O = pyridoxal 5'-phosphate + H2O2 + NH4(+). The catalysed reaction is pyridoxine 5'-phosphate + O2 = pyridoxal 5'-phosphate + H2O2. Its pathway is cofactor metabolism; pyridoxal 5'-phosphate salvage; pyridoxal 5'-phosphate from pyridoxamine 5'-phosphate: step 1/1. It functions in the pathway cofactor metabolism; pyridoxal 5'-phosphate salvage; pyridoxal 5'-phosphate from pyridoxine 5'-phosphate: step 1/1. Its function is as follows. Catalyzes the oxidation of either pyridoxine 5'-phosphate (PNP) or pyridoxamine 5'-phosphate (PMP) into pyridoxal 5'-phosphate (PLP). This chain is Pyridoxine/pyridoxamine 5'-phosphate oxidase, found in Herminiimonas arsenicoxydans.